The sequence spans 135 residues: uncharacterized protein (135 aa).

The HTH hxlR-type domain occupies 25–123 (CPIQHVVDLL…LGSDWLEQES (99 aa)).

This is an uncharacterized protein from Synechocystis sp. (strain ATCC 27184 / PCC 6803 / Kazusa).